We begin with the raw amino-acid sequence, 91 residues long: uncharacterized protein (91 aa).

The next 2 helical transmembrane spans lie at 10–30 and 46–66; these read VLFTAPGLIVGALAIGAAGGI and LLVAVLFVGAFTGIMVEQALS. Residues 68 to 91 form a disordered region; that stretch reads MRRQDGARGTARAGRNSARRRMPS.

It is found in the cell membrane. This is an uncharacterized protein from Sinorhizobium fredii (strain NBRC 101917 / NGR234).